Here is a 434-residue protein sequence, read N- to C-terminus: UPF0053 protein YrkA (434 aa).

The CNNM transmembrane domain maps to 1 to 201 (MTTINLIIFT…YKSGEINQNE (201 aa)). 3 helical membrane passes run 7 to 27 (IIFT…FAIV), 64 to 84 (LGIT…FEVI), and 101 to 121 (VLIL…VGEL). 2 CBS domains span residues 220-282 (MIPR…KIKE) and 289-346 (HINP…IRDE).

This sequence belongs to the UPF0053 family.

Its subcellular location is the cell membrane. The sequence is that of UPF0053 protein YrkA (yrkA) from Bacillus subtilis (strain 168).